The primary structure comprises 161 residues: Nucleotide-binding protein Pnuc_0290 (161 aa).

This sequence belongs to the YajQ family.

Nucleotide-binding protein. The polypeptide is Nucleotide-binding protein Pnuc_0290 (Polynucleobacter asymbioticus (strain DSM 18221 / CIP 109841 / QLW-P1DMWA-1) (Polynucleobacter necessarius subsp. asymbioticus)).